The sequence spans 158 residues: Crossover junction endodeoxyribonuclease RuvC (158 aa).

Residues Asp7, Glu66, and Asp139 contribute to the active site. Residues Asp7, Glu66, and Asp139 each contribute to the Mg(2+) site.

It belongs to the RuvC family. In terms of assembly, homodimer which binds Holliday junction (HJ) DNA. The HJ becomes 2-fold symmetrical on binding to RuvC with unstacked arms; it has a different conformation from HJ DNA in complex with RuvA. In the full resolvosome a probable DNA-RuvA(4)-RuvB(12)-RuvC(2) complex forms which resolves the HJ. It depends on Mg(2+) as a cofactor.

It is found in the cytoplasm. It catalyses the reaction Endonucleolytic cleavage at a junction such as a reciprocal single-stranded crossover between two homologous DNA duplexes (Holliday junction).. In terms of biological role, the RuvA-RuvB-RuvC complex processes Holliday junction (HJ) DNA during genetic recombination and DNA repair. Endonuclease that resolves HJ intermediates. Cleaves cruciform DNA by making single-stranded nicks across the HJ at symmetrical positions within the homologous arms, yielding a 5'-phosphate and a 3'-hydroxyl group; requires a central core of homology in the junction. The consensus cleavage sequence is 5'-(A/T)TT(C/G)-3'. Cleavage occurs on the 3'-side of the TT dinucleotide at the point of strand exchange. HJ branch migration catalyzed by RuvA-RuvB allows RuvC to scan DNA until it finds its consensus sequence, where it cleaves and resolves the cruciform DNA. In Nitratiruptor sp. (strain SB155-2), this protein is Crossover junction endodeoxyribonuclease RuvC.